The chain runs to 805 residues: MLNYNHNQIEKKWQDYWDENKTFKTNDNLGQKKFYALDMFPYPSGAGLHVGHPEGYTATDIISRYKRMQGYNVLHPMGWDAFGLPAEQYALDTGNDPREFTKKNIQTFKRQIKELGFSYDWDREVNTTDPEYYKWTQWIFIQLYNKGLAYVDEVAVNWCPALGTVLSNEEVIDGVSERGGHPVYRKPMKQWVLKITEYADQLLADLDDLDWPESLKDMQRNWIGRSEGAKVSFDVDNTEGKVEVFTTRPDTIYGASFLVLSPEHALVNSITTDEYKEKVKAYQTEASKKSDLERTDLAKDKSGVFTGAYATNPLSGEKVQIWIADYVLSTYGTGAIMAVPAHDDRDYEFAKKFDLPIIEVIEGGNVEEAAYTGEGKHINSGELDGLENEAAITKAIQLLEQKGAGEKKVNYKLRDWLFSRQRYWGEPIPVIHWEDGTMTTVPEEELPLLLPETDEIKPSGTGESPLANIDSFVNVVDEKTGMKGRRETNTMPQWAGSCWYYLRYIDPKNENMLADPEKLKHWLPVDLYIGGVEHAVLHLLYARFWHKVLYDLAIVPTKEPFQKLFNQGMILGEGNEKMSKSKGNVINPDDIVQSHGADTLRLYEMFMGPLDAAIAWSEKGLDGSRRFLDRVWRLMVNEDGTLSSKIVTTNNKSLDKVYNQTVKKVTEDFETLGFNTAISQLMVFINECYKVDEVYKPYIEGFVKMLAPIAPHIGEELWSKLGHEESITYQPWPTYDEALLVDDEVEIVVQVNGKLRAKIKIAKDTSKEEMQEIALSNDNVKASIEGKDIMKVIAVPQKLVNIVAK.

Positions 41 to 52 (PYPSGAGLHVGH) match the 'HIGH' region motif. The short motif at 577–581 (KMSKS) is the 'KMSKS' region element. ATP is bound at residue Lys-580.

The protein belongs to the class-I aminoacyl-tRNA synthetase family.

It localises to the cytoplasm. It carries out the reaction tRNA(Leu) + L-leucine + ATP = L-leucyl-tRNA(Leu) + AMP + diphosphate. This Staphylococcus aureus (strain USA300) protein is Leucine--tRNA ligase.